A 339-amino-acid chain; its full sequence is Deubiquitinase and deneddylase Dub2 (339 aa).

The chain crosses the membrane as a helical span at residues isoleucine 36–phenylalanine 56. Active-site residues include histidine 203, aspartate 220, and cysteine 282.

This sequence belongs to the peptidase C48 family.

The protein resides in the secreted. It localises to the host cell. The protein localises to the membrane. Its function is as follows. Effector proteins function to alter host cell physiology and promote bacterial survival in host tissues. This protease possesses deubiquitinating and deneddylating activities. This is Deubiquitinase and deneddylase Dub2 (cdu2) from Chlamydia trachomatis serovar A (strain ATCC VR-571B / DSM 19440 / HAR-13).